Here is a 182-residue protein sequence, read N- to C-terminus: Ferredoxin-thioredoxin reductase subunit A1, chloroplastic (182 aa).

A chloroplast-targeting transit peptide spans M1 to N81.

It belongs to the ferredoxin thioredoxin reductase alpha subunit family. In terms of assembly, heterodimer of subunit A (variable subunit) and subunit B (catalytic subunit). Heterodimeric FTR forms a complex with ferredoxin and thioredoxin.

It is found in the plastid. The protein resides in the chloroplast. Variable subunit of the ferredoxin-thioredoxin reductase (FTR), which catalyzes the two-electron reduction of thioredoxins by the electrons provided by reduced ferredoxin. This Arabidopsis thaliana (Mouse-ear cress) protein is Ferredoxin-thioredoxin reductase subunit A1, chloroplastic.